We begin with the raw amino-acid sequence, 132 residues long: Small ribosomal subunit protein uS8 (132 aa).

This sequence belongs to the universal ribosomal protein uS8 family. In terms of assembly, part of the 30S ribosomal subunit. Contacts proteins S5 and S12.

One of the primary rRNA binding proteins, it binds directly to 16S rRNA central domain where it helps coordinate assembly of the platform of the 30S subunit. In Lactococcus lactis subsp. lactis (strain IL1403) (Streptococcus lactis), this protein is Small ribosomal subunit protein uS8.